The sequence spans 668 residues: MEVGRFASKSASMTYLLLVLLVGFILPQQGQHAHARTLARRDNSPTDICKRWSQQTAIVNGTLYIYGGRSTTDASQKDNTWNDNFLTLDLKSSWGISAPKLTGLPRGDNGPPPVSNGYLWNSFSSLFLYGGEFSDNPATEPVDFSLWEYSIPSSSWIEHKSPKTSSGENSAEANIPVQRSAEGAGINVPDLGRGWYFGGHLDGYTTKGWSQSIPRVYLKSMIEYTFPGHTNNGVKINTDDKRAGPEGVWRNITEGGLQDSAGFTERADGVLVYIPGFGKEGIILGLAGGTNATFTQMNVIDVFDIASSKWYKQATSGKTPKIRVNPCAVAASAADGSSTQVYLFGGQNLIPYGEQIQYNDMWILSIPSFTWIEAKTDGQSVPPARAGHTCNIWNSQIVVTGGYVGQDLSCDSPGIYVFDASELTWKNQYTALEGGNDLNQQASQTRDSSGLGGSYGYRVPKVVQSVIGGDETGKATQTVPAVAPTDGPLATGQPLTYTVLPTAGSGPHAGSPGSGSDGPNIAAIVAGVIAGCLGVLAIYLGFVTWLYRRRLAIYKSHLAATQRSSIGSYGDKISSFPPRYSDHMSSSGLGTTGSTGNLTVTTARMSWISGDNQRHNHTRSSSGGNFDHLAQPERPSTSSSVEDLLAGQEPTFLGVMLNPRQTLRVINQ.

The first 32 residues, 1 to 32, serve as a signal peptide directing secretion; the sequence is MEVGRFASKSASMTYLLLVLLVGFILPQQGQH. At 33–522 the chain is on the extracellular side; that stretch reads AHARTLARRD…GSGSDGPNIA (490 aa). Asn60 carries N-linked (GlcNAc...) asparagine glycosylation. Kelch repeat units follow at residues 62-108 and 125-176; these read TLYI…PRGD and SLFL…ANIP. N-linked (GlcNAc...) asparagine glycans are attached at residues Asn251 and Asn291. 4 Kelch repeats span residues 283-331, 340-395, 396-445, and 463-509; these read ILGL…AVAA, QVYL…IWNS, QIVV…ASQT, and VQSV…GPHA. Residues 523–543 form a helical membrane-spanning segment; it reads AIVAGVIAGCLGVLAIYLGFV. Over 544–668 the chain is Cytoplasmic; sequence TWLYRRRLAI…PRQTLRVINQ (125 aa). Residues 611–642 form a disordered region; the sequence is DNQRHNHTRSSSGGNFDHLAQPERPSTSSSVE.

Its subcellular location is the membrane. The protein resides in the secreted. This chain is Kelch repeat-containing protein ARB_01230, found in Arthroderma benhamiae (strain ATCC MYA-4681 / CBS 112371) (Trichophyton mentagrophytes).